Reading from the N-terminus, the 76-residue chain is Exodeoxyribonuclease 7 small subunit (76 aa).

The protein belongs to the XseB family. Heterooligomer composed of large and small subunits.

The protein resides in the cytoplasm. It carries out the reaction Exonucleolytic cleavage in either 5'- to 3'- or 3'- to 5'-direction to yield nucleoside 5'-phosphates.. Bidirectionally degrades single-stranded DNA into large acid-insoluble oligonucleotides, which are then degraded further into small acid-soluble oligonucleotides. This Bacillus mycoides (strain KBAB4) (Bacillus weihenstephanensis) protein is Exodeoxyribonuclease 7 small subunit.